Consider the following 185-residue polypeptide: MISAGDFRNGLTLEIDNAVYQVIEFQHVKPGKGAAFVRTKLRDIKNGGLTERTFRPQEKYPQAHIERSDMQYLYSDGELYNFMNVETFDQIALNDEAVGDSLKFVKENDMVKMLSHQGNVFAIEPPLFVELVIVDTEPGFKGDTAQGATKPAKVETGATVYVPLFVNQGDKISIDTRTGDYMKRV.

Belongs to the elongation factor P family.

It localises to the cytoplasm. The protein operates within protein biosynthesis; polypeptide chain elongation. Involved in peptide bond synthesis. Stimulates efficient translation and peptide-bond synthesis on native or reconstituted 70S ribosomes in vitro. Probably functions indirectly by altering the affinity of the ribosome for aminoacyl-tRNA, thus increasing their reactivity as acceptors for peptidyl transferase. In Lachnoclostridium phytofermentans (strain ATCC 700394 / DSM 18823 / ISDg) (Clostridium phytofermentans), this protein is Elongation factor P.